The sequence spans 373 residues: ORC1-type DNA replication protein 2 (373 aa).

Residues 63 to 67 (TGKTS), Tyr-205, and Arg-217 each bind ATP.

This sequence belongs to the CDC6/cdc18 family.

Involved in regulation of DNA replication. This chain is ORC1-type DNA replication protein 2 (cdc6-2), found in Methanosarcina mazei (strain ATCC BAA-159 / DSM 3647 / Goe1 / Go1 / JCM 11833 / OCM 88) (Methanosarcina frisia).